The chain runs to 635 residues: Threonine--tRNA ligase (635 aa).

One can recognise a TGS domain in the interval 1 to 61 (MIAITLPDGS…EQNVDLAIVT (61 aa)). The segment at 242–533 (DHRKLGKLLD…LLENHAGALP (292 aa)) is catalytic. Residues C333, H384, and H510 each coordinate Zn(2+).

It belongs to the class-II aminoacyl-tRNA synthetase family. Homodimer. Requires Zn(2+) as cofactor.

It localises to the cytoplasm. It catalyses the reaction tRNA(Thr) + L-threonine + ATP = L-threonyl-tRNA(Thr) + AMP + diphosphate + H(+). In terms of biological role, catalyzes the attachment of threonine to tRNA(Thr) in a two-step reaction: L-threonine is first activated by ATP to form Thr-AMP and then transferred to the acceptor end of tRNA(Thr). Also edits incorrectly charged L-seryl-tRNA(Thr). The protein is Threonine--tRNA ligase of Ralstonia nicotianae (strain ATCC BAA-1114 / GMI1000) (Ralstonia solanacearum).